The sequence spans 130 residues: Small ribosomal subunit protein uS9 (130 aa).

This sequence belongs to the universal ribosomal protein uS9 family.

In Streptococcus uberis (strain ATCC BAA-854 / 0140J), this protein is Small ribosomal subunit protein uS9.